The following is a 388-amino-acid chain: Succinate--CoA ligase [ADP-forming] subunit beta (388 aa).

Residues 9–244 enclose the ATP-grasp domain; it reads KQIFAEYQLP…PSQEDPREAL (236 aa). ATP contacts are provided by residues Lys-46, 53–55, Glu-99, Ser-102, and Glu-107; that span reads GRG. Asn-199 and Asp-213 together coordinate Mg(2+). Residues Asn-264 and 321–323 contribute to the substrate site; that span reads GIV.

The protein belongs to the succinate/malate CoA ligase beta subunit family. In terms of assembly, heterotetramer of two alpha and two beta subunits. It depends on Mg(2+) as a cofactor.

The catalysed reaction is succinate + ATP + CoA = succinyl-CoA + ADP + phosphate. It catalyses the reaction GTP + succinate + CoA = succinyl-CoA + GDP + phosphate. The protein operates within carbohydrate metabolism; tricarboxylic acid cycle; succinate from succinyl-CoA (ligase route): step 1/1. In terms of biological role, succinyl-CoA synthetase functions in the citric acid cycle (TCA), coupling the hydrolysis of succinyl-CoA to the synthesis of either ATP or GTP and thus represents the only step of substrate-level phosphorylation in the TCA. The beta subunit provides nucleotide specificity of the enzyme and binds the substrate succinate, while the binding sites for coenzyme A and phosphate are found in the alpha subunit. The chain is Succinate--CoA ligase [ADP-forming] subunit beta from Pasteurella multocida (strain Pm70).